The sequence spans 101 residues: Protein translation factor SUI1 homolog (101 aa).

This sequence belongs to the SUI1 family.

This is Protein translation factor SUI1 homolog from Methanothermobacter thermautotrophicus (strain ATCC 29096 / DSM 1053 / JCM 10044 / NBRC 100330 / Delta H) (Methanobacterium thermoautotrophicum).